The chain runs to 904 residues: Polycystin-2 (904 aa).

The disordered stretch occupies residues 1–102 (MSSSRVRPQA…SSSGGVPGNF (102 aa)). The Cytoplasmic portion of the chain corresponds to 1 to 155 (MSSSRVRPQA…NSNREMYLKT (155 aa)). The span at 8–20 (PQAPQSPAASASA) shows a compositional bias: low complexity. Positions 26–38 (EGIEMEKMHHEEV) are enriched in basic and acidic residues. The span at 86–96 (SVSTTSSSSSG) shows a compositional bias: low complexity. A helical membrane pass occupies residues 156–177 (VLREMITYILFLLTLCIITYGM). Residues 178–404 (VSTNMYYYTK…TVRLLRYVSS (227 aa)) lie on the Extracellular side of the membrane. N-linked (GlcNAc...) asparagine glycans are attached at residues Asn235, Asn241, and Asn264. A disulfide bridge links Cys267 with Cys280. Asn298 is a glycosylation site (N-linked (GlcNAc...) asparagine). A helical membrane pass occupies residues 405–425 (WDYFVGMCEVSFCLFVLYYLV). Residues 426 to 441 (EEALEIRLHRLRYFKS) are Cytoplasmic-facing. The helical transmembrane segment at 442-462 (LWNCLDVLIVALSVPAIIMNI) threads the bilayer. Residues 463 to 489 (CRTSAVSHRLHFLLENHSTYPNFEPLA) are Extracellular-facing. The N-linked (GlcNAc...) asparagine glycan is linked to Asn478. The helical transmembrane segment at 490-510 (RLQVHFNNLAAIIVFLSWVKL) threads the bilayer. The Cytoplasmic segment spans residues 511-534 (FKFINFNKTMNQLSTTMSRCAKDL). A helical transmembrane segment spans residues 535–556 (MGFAIMFFIVFLAYAQLAYLVF). At 557-568 (GTQVNDFSTFQA) the chain is on the extracellular side. The pore-forming intramembrane region spans 569–583 (CIFTQFRIILGDFDF). Position 578 (Leu578) interacts with Ca(2+). The Selectivity filter motif lies at 578 to 580 (LGD). Residues 584-591 (SEIEEADS) are Extracellular-facing. The helical transmembrane segment at 592 to 612 (VLGPIYFTTFVFFIFMILLNM) threads the bilayer. At 613-904 (FLAIINDTYS…DAAASGPAHL (292 aa)) the chain is on the cytoplasmic side. The 36-residue stretch at 687 to 722 (HSDAEIEAIFAKYDLDGDQELTEHEHQQMRDDLEKE) folds into the EF-hand 1 domain. 5 residues coordinate Ca(2+): Asp700, Asp702, Asp704, Glu706, and Glu711. Basic and acidic residues predominate over residues 708–732 (TEHEHQQMRDDLEKEREDLDLEHSS). Disordered stretches follow at residues 708–770 (TEHE…SSGG) and 854–904 (ESDD…PAHL). The interval 740 to 759 (RSFSRSQDDSEEDDDEDSGH) is linker. The region spanning 768 to 786 (SGGVSYEEFQVLVRRVDRM) is the EF-hand 2 domain. Residues 770–809 (GVSYEEFQVLVRRVDRMEHSIGSIVSKIDAVIVKLEAMER) adopt a coiled-coil conformation. The segment covering 878 to 890 (LRPRSSRPPSSLS) has biased composition (low complexity).

The protein belongs to the polycystin family. In terms of assembly, homotetramer. Component of the heterotetrameric polycystin channel complex with pkd1; the tetramer contains one pkd1 chain and three pkd2 chains. Interacts with pkd1l1. In terms of processing, phosphorylated. Phosphorylation is important for protein function; a mutant human construct that lacks the N-terminal phosphorylation sites cannot complement a zebrafish pkd2-deficient mutant. Post-translationally, N-glycosylated. The four subunits in a tetramer probably differ in the extent of glycosylation; simultaneous glycosylation of all experimentally validated sites would probably create steric hindrance. Sumoylated by SUMO1; sumoylation regulates PKD2 membrane recycling. Detected along cilia and at the cilium basal body in Kupffer's vesicle at the 10 somite stage. Detected in heart at 48hpf. Detected in muscle and pronephric kidney at 48 hpf. Detected on trunk muscle sarcolemma and sarcomere, on ependymal cell cilia in brain, at the apical cell membrane in epithelial cells in the ear, at the lateral line organ and olfactory placode at 56 hpf. Detected in adult kidney (at protein level).

The protein resides in the basolateral cell membrane. It is found in the cell membrane. It localises to the sarcolemma. The protein localises to the cytoplasm. Its subcellular location is the myofibril. The protein resides in the sarcomere. It is found in the sarcoplasmic reticulum membrane. It localises to the apical cell membrane. The protein localises to the endoplasmic reticulum membrane. Its subcellular location is the cell projection. The protein resides in the cilium. It is found in the cytoskeleton. It localises to the cilium basal body. The protein localises to the cytoplasmic vesicle membrane. The catalysed reaction is K(+)(in) = K(+)(out). It carries out the reaction Na(+)(in) = Na(+)(out). The enzyme catalyses Ca(2+)(in) = Ca(2+)(out). With respect to regulation, channel activity is regulated by phosphorylation. Channel activity is regulated by intracellular Ca(2+). In terms of biological role, forms a nonselective cation channel. Can function as a homotetrameric ion channel or can form heteromer with PKD1. Displays distinct function depending on its subcellular localization and regulation by its binding partners. In the primary cilium functions as a cation channel, with a preference for monovalent cations over divalent cations that allows K(+), Na(+) and Ca(2+) influx, with low selectivity for Ca(2+). In the endoplasmic reticulum, likely functions as a K(+) channel to facilitate Ca(2+) release. Required for normal oscillation of Ca(2+) levels within cilia; these oscillations of the intraciliary Ca(2+) levels can trigger cytoplasmic Ca(2+) signaling cascades. Required for normal temporal variation of the intracellular Ca(2+) levels in the heart. Plays a role in fluid-flow mechanosensation. Required for normal specification of the body left-right axis during embryogenesis, most likely via its role in ciliary Ca(2+) oscillations in Kupffer's vesicle. The polypeptide is Polycystin-2 (Danio rerio (Zebrafish)).